A 336-amino-acid polypeptide reads, in one-letter code: Foldase protein PrsA (336 aa).

The signal sequence occupies residues 1-22 (MKSAKKLLSVLCLGIFILTFTA). A lipid anchor (N-palmitoyl cysteine) is attached at cysteine 23. A lipid anchor (S-diacylglycerol cysteine) is attached at cysteine 23. The 93-residue stretch at 194-286 (PNTMNVSHIL…FGYHIIKINS (93 aa)) folds into the PpiC domain.

Belongs to the PrsA family.

It localises to the cell membrane. The catalysed reaction is [protein]-peptidylproline (omega=180) = [protein]-peptidylproline (omega=0). Functionally, plays a major role in protein secretion by helping the post-translocational extracellular folding of several secreted proteins. The sequence is that of Foldase protein PrsA from Clostridium botulinum (strain Kyoto / Type A2).